We begin with the raw amino-acid sequence, 399 residues long: Acetate kinase (399 aa).

N10 provides a ligand contact to Mg(2+). K17 serves as a coordination point for ATP. R91 is a substrate binding site. The active-site Proton donor/acceptor is the D148. ATP is bound by residues 208–212 (HLGNG), 283–285 (DCR), and 331–335 (GIGEN). E385 contributes to the Mg(2+) binding site.

This sequence belongs to the acetokinase family. Homodimer. The cofactor is Mg(2+). It depends on Mn(2+) as a cofactor.

It is found in the cytoplasm. The enzyme catalyses acetate + ATP = acetyl phosphate + ADP. The protein operates within metabolic intermediate biosynthesis; acetyl-CoA biosynthesis; acetyl-CoA from acetate: step 1/2. In terms of biological role, catalyzes the formation of acetyl phosphate from acetate and ATP. Can also catalyze the reverse reaction. The chain is Acetate kinase from Shewanella sp. (strain ANA-3).